We begin with the raw amino-acid sequence, 268 residues long: Cell division cycle-associated protein 3 (268 aa).

Disordered regions lie at residues Met1 to Lys232 and Gly247 to Ser268. Ser29 and Ser31 each carry phosphoserine. Thr37 is subject to Phosphothreonine. Phosphoserine occurs at positions 44, 64, and 68. Positions Glu56 to Pro66 are enriched in basic and acidic residues. A Phosphothreonine modification is found at Thr76. Residues Ser87 and Ser94 each carry the phosphoserine modification. The interval Lys91–Ser120 is F-box-like. Over residues Pro107–Ala116 the composition is skewed to pro residues. The segment covering Pro117–Leu126 has biased composition (low complexity). Composition is skewed to polar residues over residues Thr128–Val149, Pro158–Asp169, and Pro178–Lys194. Position 199 is a phosphoserine (Ser199). Thr202 bears the Phosphothreonine mark. Positions Gln205–Leu215 are enriched in polar residues. Ser209 bears the Phosphoserine mark. Position 212 is a phosphothreonine (Thr212). The KEN box motif lies at Lys258 to Asn260.

In terms of assembly, interacts with SKP1. Part of a SCF (SKP1-cullin-F-box) protein ligase complex. Post-translationally, ubiquitinated and degraded by the APC/C-Cdh1 complex.

The protein localises to the cytoplasm. It is found in the cytosol. It participates in protein modification; protein ubiquitination. Its function is as follows. F-box-like protein which is required for entry into mitosis. Acts by participating in E3 ligase complexes that mediate the ubiquitination and degradation of WEE1 kinase at G2/M phase. This chain is Cell division cycle-associated protein 3 (CDCA3), found in Homo sapiens (Human).